The primary structure comprises 362 residues: MKLSALLALSASTAVLAAPAVHHSDNHHHNDKRAVVTVTQYVNADGAVVIPAANTATSAAADGKVESVAAATTTLSSTAAAATTSAAASSSSSSSSSSSSVGSGDFEDGTISCSDFPSGQGAVSLDWLGLGGWASIMDMNGNTATSCQDGYYCSYACSPGYAKTQWPSEQPSDGRSVGGLYCKNGKLYRSNTDTNSLCVEGQGSAQAVNKVSGSIAICGTDYPGSENMVVPTVVGAGSSQPINVIKEDSYYQWQGKKTSAQYYVNNAGVSVEDGCIWGTEGSGVGNWAPVVLGAGYTDGITYLSIIPNPNNKEAPNFNIKIVATDGSTVNGACSYENGVYSGSGSDGCTVSVTSGSANFVFY.

A signal peptide spans 1 to 17; that stretch reads MKLSALLALSASTAVLA.

It belongs to the SUN family.

The protein localises to the mitochondrion outer membrane. It localises to the secreted. It is found in the cell wall. Functionally, involved in aging, oxidative stress response, and in the regulation of mitochondrial biogenesis. Inactivation of UTH1 increases life span, leads to higher resistance to heat stress and to hydrogen peroxide, and increases sensitivity to the superoxide radical-generating drug paraquat and to copper. Also required for the selective autophagic degradation of mitochondria (mitophagy) in response to nitrogen starvation. May play a role in cell wall morphogenesis and septation. Involved in the remodeling of the cell wall during the various phases of yeast culture development and under various environmental conditions and plays a role in septation. Involved in cell sensitivity to boric acid. The sequence is that of Probable secreted beta-glucosidase UTH1 (UTH1) from Saccharomyces cerevisiae (strain YJM789) (Baker's yeast).